Consider the following 90-residue polypeptide: Small ribosomal subunit protein uS15c (90 aa).

It belongs to the universal ribosomal protein uS15 family. Part of the 30S ribosomal subunit.

The protein resides in the plastid. Its subcellular location is the chloroplast. This is Small ribosomal subunit protein uS15c (rps15-A) from Hordeum vulgare (Barley).